The primary structure comprises 671 residues: DNA ligase (671 aa).

NAD(+) is bound by residues 34 to 38, 83 to 84, and Glu117; these read DAEYD and SL. Lys119 functions as the N6-AMP-lysine intermediate in the catalytic mechanism. NAD(+) contacts are provided by Arg140, Glu177, Lys293, and Lys317. 4 residues coordinate Zn(2+): Cys411, Cys414, Cys429, and Cys434. The BRCT domain occupies 591–671; sequence KVGGKFTGKT…EFLQMLEGEQ (81 aa).

The protein belongs to the NAD-dependent DNA ligase family. LigA subfamily. Mg(2+) is required as a cofactor. Requires Mn(2+) as cofactor.

It carries out the reaction NAD(+) + (deoxyribonucleotide)n-3'-hydroxyl + 5'-phospho-(deoxyribonucleotide)m = (deoxyribonucleotide)n+m + AMP + beta-nicotinamide D-nucleotide.. In terms of biological role, DNA ligase that catalyzes the formation of phosphodiester linkages between 5'-phosphoryl and 3'-hydroxyl groups in double-stranded DNA using NAD as a coenzyme and as the energy source for the reaction. It is essential for DNA replication and repair of damaged DNA. The chain is DNA ligase from Geobacter metallireducens (strain ATCC 53774 / DSM 7210 / GS-15).